We begin with the raw amino-acid sequence, 158 residues long: Large ribosomal subunit protein mL50 (158 aa).

It belongs to the mitochondrion-specific ribosomal protein mL50 family. As to quaternary structure, component of the mitochondrial ribosome large subunit (39S) which comprises a 16S rRNA and about 50 distinct proteins.

It localises to the mitochondrion. This chain is Large ribosomal subunit protein mL50 (MRPL50), found in Pongo abelii (Sumatran orangutan).